The sequence spans 228 residues: MASGCKIGPSILNSDLANLGAKCLQMLDSGADYLHLDVMDGHFVPNITFGHPVVESLRKQLGQDPFFDMHMMVSKPEQWVKPMAVAEANQYTFHLEATENPGTLIKDIRENGMKVGLAIKPGTSVEYLAPWANQIDMALVMTVEPGFGEQKFMEDMMPKVHWLRTQFPSLDIEGDGGVGSDTVHKCAEAGANMTVSGSAIMRSEDPRSVINLLRNICSEAAQKRSLDR.

Position 10 (Ser10) interacts with substrate. His35, Asp37, and His70 together coordinate a divalent metal cation. Asp37 (proton acceptor) is an active-site residue. Residues His70, 146–149 (GFGE), 175–177 (DGG), and 197–198 (GS) each bind substrate. Asp175 is an a divalent metal cation binding site. The Proton donor role is filled by Asp175.

Belongs to the ribulose-phosphate 3-epimerase family. Homodimer. It depends on Fe(2+) as a cofactor. Requires Mn(2+) as cofactor. Zn(2+) is required as a cofactor. The cofactor is Co(2+).

It carries out the reaction D-ribulose 5-phosphate = D-xylulose 5-phosphate. It participates in carbohydrate degradation. Functionally, catalyzes the reversible epimerization of D-ribulose 5-phosphate to D-xylulose 5-phosphate. The protein is Ribulose-phosphate 3-epimerase-like protein 1 (RPEL1) of Homo sapiens (Human).